The primary structure comprises 274 residues: Acyl-coenzyme A diphosphatase YFT2 (274 aa).

Topologically, residues 1-11 (MIRQLNYWSRK) are cytoplasmic. Residues 12 to 32 (AYLIYPFQVFVGALLSIVVSS) form a helical membrane-spanning segment. Residues 33-60 (ETLNHQKETCALLKSSNIFNVIFAYKAN) lie on the Lumenal side of the membrane. A helical membrane pass occupies residues 61 to 81 (QLWPFLFFSLAFLQIYFHYLA). Topologically, residues 82–124 (RMDILPLPISSTETSSSYLTYTNHWPLLKNRIISIMITQYACK) are cytoplasmic. A helical transmembrane segment spans residues 125 to 145 (FVLKYLLLFLNFQFIDHVFIW). Topologically, residues 146-170 (TGGECSSGSKTTSAEKCRLENGKWD) are lumenal. Residues 171-191 (GGFDISGHFCFLVSISMILWM) traverse the membrane as a helical segment. Residue H178 is part of the active site. Residues 192-215 (ELHLFSRFVQAEDMFWVVNKWVRA) are Cytoplasmic-facing. Residues 216–236 (CLAIVCAVLVIWICILWVTAI) form a helical membrane-spanning segment. Over 237-247 (YYHTILEKVLG) the chain is Lumenal. Residue H239 is part of the active site. The chain crosses the membrane as a helical span at residues 248 to 268 (CLMGFICPVFIYHILPKIGIL). Topologically, residues 269–274 (HNYLYL) are cytoplasmic.

This sequence belongs to the FIT family. Yeast FIT2A/YFT2 subfamily.

It localises to the endoplasmic reticulum membrane. Its subcellular location is the vacuole. It catalyses the reaction an acyl-CoA + H2O = an acyl-4'-phosphopantetheine + adenosine 3',5'-bisphosphate + 2 H(+). It carries out the reaction (9Z)-octadecenoyl-CoA + H2O = S-(9Z-octadecenoyl)-4'-phosphopantetheine + adenosine 3',5'-bisphosphate + 2 H(+). The enzyme catalyses (5Z,8Z,11Z,14Z)-eicosatetraenoyl-CoA + H2O = S-(5Z,8Z,11Z,14Z-eicosatetraenoyl)-4'-phosphopantetheine + adenosine 3',5'-bisphosphate + 2 H(+). The catalysed reaction is hexadecanoyl-CoA + H2O = S-hexadecanoyl-4'-phosphopantetheine + adenosine 3',5'-bisphosphate + 2 H(+). In terms of biological role, fatty acyl-coenzyme A (CoA) diphosphatase that hydrolyzes fatty acyl-CoA to yield acyl-4'-phosphopantetheine and adenosine 3',5'-bisphosphate. Preferentially hydrolyzes unsaturated long-chain acyl-CoA substrates in the endoplasmic reticulum (ER) lumen. This catalytic activity is required for maintaining ER structure and for lipid droplets (LDs) biogenesis, which are lipid storage organelles involved in maintaining lipid and energy homeostasis. May directly bind to diacylglycerol (DAGs) and triacylglycerol, which is also important for LD biogenesis. May support directional budding of nacent LDs from the ER into the cytosol by reducing DAG levels at sites of LD formation. May play a role in the regulation of cell morphology and cytoskeletal organization. Involved in phospholipid biosynthesis. The sequence is that of Acyl-coenzyme A diphosphatase YFT2 from Saccharomyces cerevisiae (strain ATCC 204508 / S288c) (Baker's yeast).